The chain runs to 577 residues: MLWPCLLALLLSQLNFLCAARPGPGPNFLLIMADDLGIGDLGCYGNRTLRTPHIDRLALEGVKLTQHLAAAPLCTPSRAAFLTGRYPVRSGMASHGRLGVFLFSASSGGLPPNEVTFAKLLKGQGYTTGLVGKWHLGLSCQAASDFCHHPGRHGFDRFLGTPTTNLRDCKPGGGTVFGSAQQVFVVLPMNILGAVLLAMALARWAGLARPPGWVFGVTVAAMAAVGGAYVAFLYHFRPANCFLMADFTITQQPTDYKGLTQRLASEAGDFLRRNRDTPFLLFLSFMHVHTAHFANPEFAGQSLHGAYGDAVEEMDWAVGQVLATLDKLGLANNTLVYLTSDHGAHVEELGPNGERHGGSNGIYRGGKANTWEGGIRVPGLVRWPGVIVPGQEVEEPTSNMDVFPTVARLAGAELPTDRVIDGRDLMPLLLGHVQHSEHEFLFHYCNAYLSAVAWRPHNSSSVWKAFYFTPNFDPPGSNGCFSTHVCMCHGHHVTHHDPPLLFDIARDPRERHPLTPETEPRHGEILRNMDAAARAHVATLEEAPNQLSMSNVAWKPWLQLCLPSKPHPLACRCAGDG.

A signal peptide spans 1-19 (MLWPCLLALLLSQLNFLCA). The Lumenal segment spans residues 21 to 183 (RPGPGPNFLL…GTVFGSAQQV (163 aa)). Ca(2+) contacts are provided by Asp34 and Asp35. An N-linked (GlcNAc...) asparagine glycan is attached at Asn46. Cys74 contacts Ca(2+). Cys74 (nucleophile) is an active-site residue. Cys74 carries the post-translational modification 3-oxoalanine (Cys). The active site involves His135. 2 disulfide bridges follow: Cys140-Cys147 and Cys169-Cys241. Residues 184-207 (FVVLPMNILGAVLLAMALARWAGL) form a helical membrane-spanning segment. Topologically, residues 208–211 (ARPP) are cytoplasmic. Residues 212–233 (GWVFGVTVAAMAAVGGAYVAFL) traverse the membrane as a helical segment. The Lumenal portion of the chain corresponds to 234–577 (YHFRPANCFL…PLACRCAGDG (344 aa)). N-linked (GlcNAc...) asparagine glycosylation is present at Asn332. Residues Asp341 and His342 each coordinate Ca(2+). 3 cysteine pairs are disulfide-bonded: Cys445-Cys488, Cys480-Cys486, and Cys561-Cys571. Asn458 is a glycosylation site (N-linked (GlcNAc...) asparagine).

It belongs to the sulfatase family. In terms of assembly, homodimer. It depends on Ca(2+) as a cofactor. In terms of processing, the conversion to 3-oxoalanine (also known as C-formylglycine, FGly), of a serine or cysteine residue in prokaryotes and of a cysteine residue in eukaryotes, is critical for catalytic activity.

Its subcellular location is the microsome membrane. It localises to the endoplasmic reticulum membrane. The catalysed reaction is dehydroepiandrosterone 3-sulfate + H2O = 3beta-hydroxyandrost-5-en-17-one + sulfate + H(+). It catalyses the reaction estrone 3-sulfate + H2O = estrone + sulfate + H(+). In terms of biological role, catalyzes the conversion of sulfated steroid precursors, such as dehydroepiandrosterone sulfate (DHEA-S) and estrone sulfate to the free steroid. This is Steryl-sulfatase (Sts) from Rattus norvegicus (Rat).